A 110-amino-acid chain; its full sequence is Small ribosomal subunit protein bS16 (110 aa).

Positions 84–110 are disordered; the sequence is KRAPRNNPEKAVPRKERKAAAEAAAKA. The segment covering 90–103 has biased composition (basic and acidic residues); the sequence is NPEKAVPRKERKAA.

Belongs to the bacterial ribosomal protein bS16 family.

The polypeptide is Small ribosomal subunit protein bS16 (Afipia carboxidovorans (strain ATCC 49405 / DSM 1227 / KCTC 32145 / OM5) (Oligotropha carboxidovorans)).